Reading from the N-terminus, the 493-residue chain is Proline--tRNA ligase (493 aa).

The protein belongs to the class-II aminoacyl-tRNA synthetase family. ProS type 3 subfamily. Homodimer.

It localises to the cytoplasm. It carries out the reaction tRNA(Pro) + L-proline + ATP = L-prolyl-tRNA(Pro) + AMP + diphosphate. In terms of biological role, catalyzes the attachment of proline to tRNA(Pro) in a two-step reaction: proline is first activated by ATP to form Pro-AMP and then transferred to the acceptor end of tRNA(Pro). This is Proline--tRNA ligase from Azobacteroides pseudotrichonymphae genomovar. CFP2.